Consider the following 66-residue polypeptide: Large ribosomal subunit protein bL35c (66 aa).

It belongs to the bacterial ribosomal protein bL35 family.

It is found in the plastid. The protein resides in the chloroplast. The chain is Large ribosomal subunit protein bL35c from Gracilaria tenuistipitata var. liui (Red alga).